Reading from the N-terminus, the 592-residue chain is A-type ATP synthase subunit A (592 aa).

An ATP-binding site is contributed by 234-241 (GGFGTGKT).

This sequence belongs to the ATPase alpha/beta chains family. As to quaternary structure, has multiple subunits with at least A(3), B(3), C, D, E, F, H, I and proteolipid K(x).

The protein resides in the cell membrane. It carries out the reaction ATP + H2O + 4 H(+)(in) = ADP + phosphate + 5 H(+)(out). Component of the A-type ATP synthase that produces ATP from ADP in the presence of a proton gradient across the membrane. The A chain is the catalytic subunit. This is A-type ATP synthase subunit A from Cenarchaeum symbiosum (strain A).